Reading from the N-terminus, the 545-residue chain is Probable zinc metalloprotease EGY2, chloroplastic (545 aa).

A chloroplast-targeting transit peptide spans 1 to 63 (MQLPAMSCSP…QIRNRRFVCQ (63 aa)). The segment at 66-142 (TETEPDGDGN…DATPASDAQE (77 aa)) is disordered. Residues 68–85 (TEPDGDGNGDEEKEELGD) are compositionally biased toward acidic residues. Polar residues-rich tracts occupy residues 88–109 (SSPS…TNAD) and 117–129 (NTEP…TVQN). 7 consecutive transmembrane segments (helical) span residues 256 to 276 (AVPE…TLLL), 300 to 320 (VYGA…HILA), 325 to 345 (GIKL…FGAI), 363 to 383 (AAGP…GFIL), 426 to 446 (PLVL…IPAG), 473 to 493 (LLGI…LIFF), and 513 to 533 (YISI…PYPF).

The protein belongs to the peptidase M50B family.

Its subcellular location is the plastid. It is found in the chloroplast membrane. Functionally, probable membrane-associated metalloprotease that may be involved in chloroplast development. This is Probable zinc metalloprotease EGY2, chloroplastic (EGY2) from Oryza sativa subsp. indica (Rice).